The sequence spans 333 residues: Cytochrome f (333 aa).

The first 44 residues, 1 to 44, serve as a signal peptide directing secretion; sequence MRNACTRARLTRTARAMVKTLFIAIASVTFFFTSDLALPQSAAA. Residues Y45, C66, C69, and H70 each coordinate heme. The chain crosses the membrane as a helical span at residues 299 to 318; that stretch reads VGWLIAFVALVMLAQVMLVL.

Belongs to the cytochrome f family. As to quaternary structure, the 4 large subunits of the cytochrome b6-f complex are cytochrome b6, subunit IV (17 kDa polypeptide, PetD), cytochrome f and the Rieske protein, while the 4 small subunits are PetG, PetL, PetM and PetN. The complex functions as a dimer. Requires heme as cofactor.

Its subcellular location is the cellular thylakoid membrane. In terms of biological role, component of the cytochrome b6-f complex, which mediates electron transfer between photosystem II (PSII) and photosystem I (PSI), cyclic electron flow around PSI, and state transitions. This is Cytochrome f from Trichormus variabilis (strain ATCC 29413 / PCC 7937) (Anabaena variabilis).